A 60-amino-acid chain; its full sequence is Large ribosomal subunit protein bL32 (60 aa).

Belongs to the bacterial ribosomal protein bL32 family.

In Ruminiclostridium cellulolyticum (strain ATCC 35319 / DSM 5812 / JCM 6584 / H10) (Clostridium cellulolyticum), this protein is Large ribosomal subunit protein bL32.